Reading from the N-terminus, the 132-residue chain is MDVTRLLLATLLVFLCFFTAYSHPPPEEKLRDDRSLRSNSSVNLLDFPSVSIVALNKNSKQISRKEAEKKRSSKKEASMKKVARPRTPLSAPCVATRDSCKSPAPACCDPCASCQCRFFRSACSCRVLSLNC.

The signal sequence occupies residues 1–22 (MDVTRLLLATLLVFLCFFTAYS). Asparagine 39 carries an N-linked (GlcNAc...) asparagine glycan. Residues 61–87 (QISRKEAEKKRSSKKEASMKKVARPRT) are disordered. Over residues 63–79 (SRKEAEKKRSSKKEASM) the composition is skewed to basic and acidic residues. 5 cysteine pairs are disulfide-bonded: cysteine 93–cysteine 108, cysteine 100–cysteine 114, cysteine 107–cysteine 125, cysteine 111–cysteine 132, and cysteine 116–cysteine 123. The Agouti domain occupies 93–132 (CVATRDSCKSPAPACCDPCASCQCRFFRSACSCRVLSLNC).

It is found in the secreted. Involved in the regulation of melanogenesis. The binding of ASP to MC1R precludes alpha-MSH initiated signaling and thus blocks production of cAMP, leading to a down-regulation of eumelanogenesis (brown/black pigment) and thus increasing synthesis of pheomelanin (yellow/red pigment). The chain is Agouti-signaling protein (ASIP) from Macaca nigra (Celebes black macaque).